We begin with the raw amino-acid sequence, 680 residues long: Serine/threonine-protein kinase YPK1 (680 aa).

The segment covering 1 to 11 (MYSWKSKFKFG) has biased composition (basic residues). The interval 1-117 (MYSWKSKFKF…GTPNDATSSS (117 aa)) is disordered. 2 stretches are compositionally biased toward basic and acidic residues: residues 12-21 (KSKEEKEAKH) and 41-56 (GEHD…DRKG). Position 57 is a phosphothreonine (threonine 57). Over residues 59-71 (NPSNSSVVPVRVS) the composition is skewed to low complexity. Residues serine 61, serine 64, and serine 71 each carry the phosphoserine modification. The segment covering 73–83 (DASSSTSTVRD) has biased composition (polar residues). Residues 84-97 (SNGGNSENTNSSQN) are compositionally biased toward low complexity. Residues 98-117 (LDETANIGSTGTPNDATSSS) show a composition bias toward polar residues. Phosphoserine is present on serine 170. The Protein kinase domain maps to 347 to 602 (FDLLKVIGKG…ADEIRNHPFF (256 aa)). Residues 353-361 (IGKGSFGKV) and lysine 376 contribute to the ATP site. Aspartate 470 (proton acceptor) is an active-site residue. Threonine 502 carries the post-translational modification Phosphothreonine. Phosphothreonine; by PKH1 is present on threonine 504. The 71-residue stretch at 603 to 673 (SQLSWKRLLM…VGNEQLGSSM (71 aa)) folds into the AGC-kinase C-terminal domain. Residues serine 644 and serine 653 each carry the phosphoserine modification. Threonine 662 is subject to Phosphothreonine; by PKH1. Phosphoserine is present on serine 671.

It belongs to the protein kinase superfamily. AGC Ser/Thr protein kinase family. RAC subfamily. Autophosphorylated. Phytosphingosine level stimulates phosphorylation by PKH1. The N-terminal half is phosphorylated by FPK1. Phosphorylation is inhibited by exogenous addition of phytosphingosine.

The protein resides in the cytoplasm. The protein localises to the cell membrane. The enzyme catalyses L-seryl-[protein] + ATP = O-phospho-L-seryl-[protein] + ADP + H(+). It carries out the reaction L-threonyl-[protein] + ATP = O-phospho-L-threonyl-[protein] + ADP + H(+). With respect to regulation, activated by phytosphingosine (PHS), a sphingoid long chain base. Activated by PKH1 phosphorylation. Plays an essential role in the proliferation of yeast cells. Involved in a signaling pathway, required for optimal cell wall integrity, that acts in parallel with the PKC1-SLT2-dependent pathway. Downstream kinase in the sphingolipid-mediated signaling pathway. Phosphorylation is regulated by the intracellular sphingolipid concentration. Disruption or inhibition of sphingolipid synthesis leads to the activation and phosphorylation of YPK1 through the TORC2 and PKH1 pathways, which in turn phosphorylates ORM1 and LAG1 to activate sphingolipid synthesis. Cooperates with SLI1 in mediating resistance to the sphingolipid biosynthesis inhibitor drug myriocin (ISP-1); kinase activity is essential for the resistance. Required for both receptor-mediated and fluid-phase endocytosis, but is not necessary for receptor phosphorylation or ubiquitination. Necessary for the internalization of plasma membrane proteins carrying different types of internalization signals. Acts downstream of the PKH kinases to control endocytosis by phosphorylating components of the endocytic machinery. Phosphorylation of residue Thr-504 in the activation loop and residue Thr-662 are essential for activity. Phosphorylates and down-regulates flippase activator FPK1. The protein is Serine/threonine-protein kinase YPK1 (YPK1) of Saccharomyces cerevisiae (strain ATCC 204508 / S288c) (Baker's yeast).